Here is a 252-residue protein sequence, read N- to C-terminus: TLC domain-containing protein 1 (252 aa).

The N-terminal stretch at 1–29 (MGPGWRAPSAALVGGSVALFGALRRAALA) is a signal peptide. Residues 30 to 47 (LPRPAAVRSRPGRVWRWR) are Extracellular-facing. One can recognise a TLC domain in the interval 41–235 (GRVWRWRNLL…LLRSDFFPSL (195 aa)). A helical membrane pass occupies residues 48-68 (NLLVSFAHSVLAGLWALFSLW). Residues 69 to 84 (QSPELLSDIQDGYSVS) lie on the Cytoplasmic side of the membrane. A helical transmembrane segment spans residues 85–105 (GHLLVCFSSGYFIHDSLDIIF). The Extracellular segment spans residues 106–124 (NQQSRSSWEYLVHHAMAIS). An intramembrane region (helical) is located at residues 125 to 145 (AFVSLIITGRFLVAAMLLLLV). At 146-174 (EVSNIFLTIRMLLKMSNVPSPALYEANKY) the chain is on the extracellular side. A helical transmembrane segment spans residues 175–195 (VNLVMYFAFRLAPQVYLTWYF). Residues 196–202 (VRYVEVQ) are Cytoplasmic-facing. Residues 203-223 (GQGAFLMANLLLLDAMILMYF) form a helical membrane-spanning segment. Residues 224–252 (SRLLRSDFFPSLRKGSVGRDVDGEKFLID) lie on the Extracellular side of the membrane.

As to quaternary structure, interacts with CACNA1C in vitro; however the relevance of the interaction in vivo is unclear.

It is found in the cell membrane. Its function is as follows. Regulates the composition and fluidity of the plasma membrane. Inhibits the incorporation of membrane-fluidizing phospholipids containing omega-3 long-chain polyunsaturated fatty acids (LCPUFA) and thereby promotes membrane rigidity. Does not appear to have any effect on LCPUFA synthesis. This Gallus gallus (Chicken) protein is TLC domain-containing protein 1 (TLCD1).